A 252-amino-acid polypeptide reads, in one-letter code: Trans-aconitate 2-methyltransferase (252 aa).

It belongs to the methyltransferase superfamily. Tam family.

It is found in the cytoplasm. The catalysed reaction is trans-aconitate + S-adenosyl-L-methionine = (E)-3-(methoxycarbonyl)pent-2-enedioate + S-adenosyl-L-homocysteine. Its function is as follows. Catalyzes the S-adenosylmethionine monomethyl esterification of trans-aconitate. In Escherichia coli (strain 55989 / EAEC), this protein is Trans-aconitate 2-methyltransferase.